Reading from the N-terminus, the 191-residue chain is UPF0301 protein Bphy_2327 (191 aa).

This sequence belongs to the UPF0301 (AlgH) family.

The sequence is that of UPF0301 protein Bphy_2327 from Paraburkholderia phymatum (strain DSM 17167 / CIP 108236 / LMG 21445 / STM815) (Burkholderia phymatum).